Here is a 1026-residue protein sequence, read N- to C-terminus: Multidrug resistance protein MdtC (1026 aa).

The next 11 helical transmembrane spans lie at 15–35, 333–353, 360–380, 387–407, 431–451, 463–483, 528–548, 853–873, 897–917, 953–973, and 984–1004; these read ILIA…LPVA, EVEE…FLFL, LIPA…MYLC, LSLM…IVVL, VGFT…PLLL, FAVT…TLTP, LVGV…IAIP, LILI…LYES, LFNA…IGIV, PIMM…LSGG, and ITIV…TPVV.

Belongs to the resistance-nodulation-cell division (RND) (TC 2.A.6) family. MdtC subfamily. Part of a tripartite efflux system composed of MdtA, MdtB and MdtC. MdtC forms a heteromultimer with MdtB.

It localises to the cell inner membrane. The sequence is that of Multidrug resistance protein MdtC from Salmonella schwarzengrund (strain CVM19633).